Consider the following 157-residue polypeptide: uncharacterized protein (157 aa).

The helical transmembrane segment at 6-26 (LVGGVLRVLVVVGAVFDVAVL) threads the bilayer. Residues 33–157 (ADGPVQLKSR…APDQQWDSVP (125 aa)) enclose the Ricin B-type lectin domain.

It localises to the membrane. This is an uncharacterized protein from Mycobacterium tuberculosis (strain CDC 1551 / Oshkosh).